We begin with the raw amino-acid sequence, 321 residues long: uncharacterized protein (321 aa).

28-35 (GPINSGKT) is an ATP binding site.

The protein belongs to the archaeal ATPase family.

This is an uncharacterized protein from Pyrococcus horikoshii (strain ATCC 700860 / DSM 12428 / JCM 9974 / NBRC 100139 / OT-3).